The primary structure comprises 43 residues: Potassium channel toxin gamma-KTx 4.11 (43 aa).

4 disulfides stabilise this stretch: C5-C23, C11-C34, C20-C39, and C24-C41.

Belongs to the ergtoxin family. Gamma-KTx 4 subfamily. Expressed by the venom gland.

It is found in the secreted. Its function is as follows. Reversibly blocks Kv11/ERG potassium channels. This is Potassium channel toxin gamma-KTx 4.11 from Centruroides noxius (Mexican scorpion).